The following is a 94-amino-acid chain: Alpha-conotoxin Ms20.3 (94 aa).

Residues 1–24 form the signal peptide; it reads MPKLAVVLLVLLILPLSYFDAAGG. Positions 25-45 are excised as a propeptide; sequence QVVQGDRRGNGLARYLQRGDR. Position 49 is a 4-carboxyglutamate (glutamate 49). At proline 55 the chain carries 4-hydroxyproline. Intrachain disulfides connect cysteine 63/cysteine 72, cysteine 68/cysteine 80, cysteine 73/cysteine 90, and cysteine 78/cysteine 92.

It belongs to the conotoxin D superfamily. As to quaternary structure, hetero-, homo- or pseudo-homodimer (identical sequence, different post-translational modifications). Homodimer of [carboxyGlu-49, hydroxyPro-55]Ms20.3, and heterodimer of [carboxyGlu-49, hydroxyPro-55]Ms20.3 and [carboxy'Glu-50', hydroxy'Pro-56']Ms20.5 may exist. Expressed by the venom duct.

The protein resides in the secreted. Functionally, alpha-D-conopeptides act on postsynaptic membranes, they bind to the nicotinic acetylcholine receptors (nAChR) and thus inhibit them. Through its two C-terminal domains, this homodimeric protein would bind to two nAChR allosteric sites, located outside the nAChR C-loop of the principal binding face and at the adjacent binding interface in a clockwise direction. This toxin specifically blocks mammalian neuronal nAChR of the alpha-7/CHRNA7 (IC(50)=0.12 nM), alpha-3-beta-2/CHRNA3-CHRNB2 (IC(50)=1.08 nM), and alpha-4-beta-2/CHRNA4-CHRNB2 (IC(50)=4.5 nM) subtypes. Has no effect on alpha-3-beta-4/CHRNA3-CHRNB4, alpha-4-beta-4/CHRNA4-CHRNB4 and alpha-1-beta-1-epsilon-delta/CHRNA1-CHRNB1-CHRNE-CHRND subtypes of nAChRs. This chain is Alpha-conotoxin Ms20.3, found in Conus mustelinus (Weasel cone).